Here is a 699-residue protein sequence, read N- to C-terminus: Elongation factor G (699 aa).

One can recognise a tr-type G domain in the interval 8 to 288; the sequence is EDYRNFGIMA…AVCEYLPSPL (281 aa). GTP contacts are provided by residues 17–24, 86–90, and 140–143; these read AHIDAGKT, DTPGH, and NKMD.

Belongs to the TRAFAC class translation factor GTPase superfamily. Classic translation factor GTPase family. EF-G/EF-2 subfamily.

Its subcellular location is the cytoplasm. Its function is as follows. Catalyzes the GTP-dependent ribosomal translocation step during translation elongation. During this step, the ribosome changes from the pre-translocational (PRE) to the post-translocational (POST) state as the newly formed A-site-bound peptidyl-tRNA and P-site-bound deacylated tRNA move to the P and E sites, respectively. Catalyzes the coordinated movement of the two tRNA molecules, the mRNA and conformational changes in the ribosome. The polypeptide is Elongation factor G (Allorhizobium ampelinum (strain ATCC BAA-846 / DSM 112012 / S4) (Agrobacterium vitis (strain S4))).